The sequence spans 701 residues: SH3 domain-binding protein 1 (701 aa).

Positions 1–10 (MMKRQLHRMR) are enriched in basic residues. Disordered stretches follow at residues 1 to 23 (MMKR…RTPE) and 160 to 182 (SQAT…HSHT). Residues 1–275 (MMKRQLHRMR…TATHFPRVYG (275 aa)) form an interaction with CGNL1 region. The BAR domain maps to 17 to 262 (SLGRTPETAE…RENHGQADHS (246 aa)). Ser175, Ser241, Ser262, and Ser264 each carry phosphoserine. A Rho-GAP domain is found at 276–469 (VSLATHLQEL…ALIQSADTLF (194 aa)). Positions 470-701 (PGDINFNVSG…RPRSLASETN (232 aa)) are interaction with CD2AP. A disordered region spans residues 496-701 (SEELPSTAVP…RPRSLASETN (206 aa)). Residues 508–522 (ATTPAPAPAPAPAPA) are compositionally biased toward pro residues. 2 positions are modified to phosphoserine: Ser544 and Ser550. 2 stretches are compositionally biased toward pro residues: residues 570–579 (PARPTMPPPQ) and 587–596 (PPAPPLPPGS). The residue at position 601 (Thr601) is a Phosphothreonine. Positions 616–625 (APTVPPPLPP) match the SH3-binding motif. Pro residues-rich tracts occupy residues 618-630 (TVPP…PPQP) and 641-652 (SPSPASPGPASP). Thr626 is subject to Phosphothreonine. Phosphoserine is present on Ser653. A compositionally biased stretch (low complexity) spans 666-677 (GAATAEGGAPEA). Residues 682-692 (PTPPAIPPQPR) are compositionally biased toward pro residues.

Interacts with RAC1. Interacts with the exocyst via EXOC4 and EXOC8; required for the localization of both SH3BP1 and the exocyst to the leading edge of migrating cells. Interacts with CD2AP and CGNL1; probably part of a complex at cell junctions. Interacts with CAPZA1; recruits CAPZA1 to forming cell junctions. May interact with AFDN. Interacts with PLXND1; they dissociate upon SEMA3E binding to PLXND1 allowing SH3BP1 to transduce downstream signal through RAC1 inactivation. Interacts with ABL1, GRB2 and SRC (via SH3 domain).

It is found in the cell projection. It localises to the cell junction. The protein localises to the tight junction. Its subcellular location is the adherens junction. The protein resides in the phagocytic cup. It is found in the nucleus. It localises to the cytoplasm. The protein localises to the cytosol. Functionally, GTPase activating protein (GAP) which specifically converts GTP-bound Rho-type GTPases including RAC1 and CDC42 in their inactive GDP-bound form. By specifically inactivating RAC1 at the leading edge of migrating cells, it regulates the spatiotemporal organization of cell protrusions which is important for proper cell migration. Also negatively regulates CDC42 in the process of actin remodeling and the formation of epithelial cell junctions. Through its GAP activity toward RAC1 and/or CDC42 plays a specific role in phagocytosis of large particles. Specifically recruited by a PI3 kinase/PI3K-dependent mechanism to sites of large particles engagement, inactivates RAC1 and/or CDC42 allowing the reorganization of the underlying actin cytoskeleton required for engulfment. It also plays a role in angiogenesis and the process of repulsive guidance as part of a semaphorin-plexin signaling pathway. Following the binding of PLXND1 to extracellular SEMA3E it dissociates from PLXND1 and inactivates RAC1, inducing the intracellular reorganization of the actin cytoskeleton and the collapse of cells. This Homo sapiens (Human) protein is SH3 domain-binding protein 1.